The primary structure comprises 357 residues: 4-hydroxyphenylpyruvate dioxygenase (357 aa).

VOC domains lie at 17–137 and 165–316; these read GFEF…LVDR and YIDH…IFTD. Fe cation contacts are provided by His168, His246, and Glu325.

It belongs to the 4HPPD family. Homotetramer. The cofactor is Fe cation.

The catalysed reaction is 3-(4-hydroxyphenyl)pyruvate + O2 = homogentisate + CO2. It participates in amino-acid degradation; L-phenylalanine degradation; acetoacetate and fumarate from L-phenylalanine: step 3/6. The chain is 4-hydroxyphenylpyruvate dioxygenase (hpd) from Pseudomonas aeruginosa (strain ATCC 15692 / DSM 22644 / CIP 104116 / JCM 14847 / LMG 12228 / 1C / PRS 101 / PAO1).